A 108-amino-acid polypeptide reads, in one-letter code: Thiosulfate sulfurtransferase GlpE (108 aa).

One can recognise a Rhodanese domain in the interval 17 to 105; that stretch reads HQGAAVLVDI…WHRHFPADVA (89 aa). Cysteine 65 acts as the Cysteine persulfide intermediate in catalysis.

The protein belongs to the GlpE family.

It localises to the cytoplasm. It catalyses the reaction thiosulfate + hydrogen cyanide = thiocyanate + sulfite + 2 H(+). The catalysed reaction is thiosulfate + [thioredoxin]-dithiol = [thioredoxin]-disulfide + hydrogen sulfide + sulfite + 2 H(+). Transferase that catalyzes the transfer of sulfur from thiosulfate to thiophilic acceptors such as cyanide or dithiols. May function in a CysM-independent thiosulfate assimilation pathway by catalyzing the conversion of thiosulfate to sulfite, which can then be used for L-cysteine biosynthesis. This chain is Thiosulfate sulfurtransferase GlpE, found in Salmonella arizonae (strain ATCC BAA-731 / CDC346-86 / RSK2980).